The sequence spans 352 residues: Peptide chain release factor 1 (352 aa).

The residue at position 230 (Q230) is an N5-methylglutamine.

Belongs to the prokaryotic/mitochondrial release factor family. In terms of processing, methylated by PrmC. Methylation increases the termination efficiency of RF1.

It is found in the cytoplasm. In terms of biological role, peptide chain release factor 1 directs the termination of translation in response to the peptide chain termination codons UAG and UAA. The polypeptide is Peptide chain release factor 1 (Exiguobacterium sibiricum (strain DSM 17290 / CCUG 55495 / CIP 109462 / JCM 13490 / 255-15)).